Here is a 118-residue protein sequence, read N- to C-terminus: NADPH-dependent 7-cyano-7-deazaguanine reductase (118 aa).

C34 serves as the catalytic Thioimide intermediate. D41 (proton donor) is an active-site residue. Residues 56–58 and 75–76 contribute to the substrate site; these read VEL and HE.

Belongs to the GTP cyclohydrolase I family. QueF type 1 subfamily.

It is found in the cytoplasm. It carries out the reaction 7-aminomethyl-7-carbaguanine + 2 NADP(+) = 7-cyano-7-deazaguanine + 2 NADPH + 3 H(+). The protein operates within tRNA modification; tRNA-queuosine biosynthesis. Catalyzes the NADPH-dependent reduction of 7-cyano-7-deazaguanine (preQ0) to 7-aminomethyl-7-deazaguanine (preQ1). This Halorhodospira halophila (strain DSM 244 / SL1) (Ectothiorhodospira halophila (strain DSM 244 / SL1)) protein is NADPH-dependent 7-cyano-7-deazaguanine reductase.